Here is a 501-residue protein sequence, read N- to C-terminus: G protein-activated inward rectifier potassium channel 1 (501 aa).

The disordered stretch occupies residues 1–40 (MSALRRKFGDDYQVVTTSSSGSGLQPQGPGQDPQQQLVPK). At 1 to 80 (MSALRRKFGD…LFTTLVDLKW (80 aa)) the chain is on the cytoplasmic side. Residues 18–38 (SSSGSGLQPQGPGQDPQQQLV) are compositionally biased toward low complexity. The chain crosses the membrane as a helical span at residues 81-105 (RWNLFIFILTYTVAWLFMASMWWVI). Over 106 to 129 (AYTRGDLNKAHVGNYTPCVANVYN) the chain is Extracellular. N-linked (GlcNAc...) asparagine glycosylation is present at N119. The helical; Pore-forming intramembrane region spans 130–141 (FPSAFLFFIETE). The segment at residues 142-148 (ATIGYGY) is an intramembrane region (pore-forming). Residues 143–148 (TIGYGY) carry the Selectivity filter motif. At 149-157 (RYITDKCPE) the chain is on the extracellular side. A helical membrane pass occupies residues 158–179 (GIILFLFQSILGSIVDAFLIGC). Residues 180 to 501 (MFIKMSQPKK…LRKMNSDRFT (322 aa)) lie on the Cytoplasmic side of the membrane. The segment at 182-209 (IKMSQPKKRAETLMFSEHAVISMRDGKL) is polyphosphoinositide (PIP2)-binding. S385 and S424 each carry phosphoserine.

The protein belongs to the inward rectifier-type potassium channel (TC 1.A.2.1) family. KCNJ3 subfamily. As to quaternary structure, associates with KCNJ5/GIRK4 or KCNJ6/GIRK2 to form a G-protein activated heteromultimer pore-forming unit. The resulting inward current is much larger. Associates with KCNJ9/GIRK3 to form a G-protein activated heteromultimer pore-forming unit.

The protein localises to the membrane. It catalyses the reaction K(+)(in) = K(+)(out). Heteromultimer composed of KCNJ3/GIRK1 and KCNJ5/GIRK4 is activated by phosphatidylinositol 4,5 biphosphate (PtdIns(4,5)P2). Its function is as follows. Inward rectifier potassium channels are characterized by a greater tendency to allow potassium to flow into the cell rather than out of it. Their voltage dependence is regulated by the concentration of extracellular potassium; as external potassium is raised, the voltage range of the channel opening shifts to more positive voltages. The inward rectification is mainly due to the blockage of outward current by internal magnesium. This potassium channel is controlled by G proteins. This receptor plays a crucial role in regulating the heartbeat. The sequence is that of G protein-activated inward rectifier potassium channel 1 (KCNJ3) from Homo sapiens (Human).